The following is a 246-amino-acid chain: MAYLRSSFVFFLLAFVTYTYAATFEVRNNCPYTVWAASTPIGGGRRLDRGQTWVINAPRGTKMARIWGRTNCNFDGDGRGSCQTGDCGGVLQCTGWGKPPNTLAEYALDQFSNLDFWDISLVDGFNIPMTFAPTNPSGGKCHAIHCTANINGECPGSLRVPGGCNNPCTTFGGQQYCCTQGPCGPTDLSRFFKQRCPDAYSYPQDDPTSTFTCPSGSTNYRVVFCPNGVTSPNFPLEMPSSDEEAK.

Positions 1-21 (MAYLRSSFVFFLLAFVTYTYA) are cleaved as a signal peptide. Intrachain disulfides connect Cys-30/Cys-225, Cys-72/Cys-82, Cys-87/Cys-93, Cys-141/Cys-213, Cys-146/Cys-196, Cys-154/Cys-164, Cys-168/Cys-177, and Cys-178/Cys-183.

It belongs to the thaumatin family.

The protein resides in the vacuole. The catalysed reaction is Endohydrolysis of (1-&gt;3)- or (1-&gt;4)-linkages in beta-D-glucans when the glucose residue whose reducing group is involved in the linkage to be hydrolyzed is itself substituted at C-3.. Antifungal protein that inhibits the growth of several phytopathogenic fungi (e.g. Trichothecium roseum, Fusarium oxysporum, Phytophthora citrophthora and Colletotrichum coccodes). May bind to beta-glucans and have beta-1,3-D-glucanase activity. The protein is Osmotin-like protein TPM-1 of Solanum lycopersicum (Tomato).